A 271-amino-acid polypeptide reads, in one-letter code: Thiosulfate sulfurtransferase (271 aa).

Rhodanese domains follow at residues 21–129 (GAPE…ALDR) and 159–270 (GAAD…TPVE). The active-site Cysteine persulfide intermediate is Cys230.

It localises to the cytoplasm. It carries out the reaction thiosulfate + hydrogen cyanide = thiocyanate + sulfite + 2 H(+). Functionally, catalyzes the sulfur transfer reaction from thiosulfate to cyanide, thus converting cyanide to the less toxic thiocyanate. Contributes to P.aeruginosa survival under cyanogenic conditions, and thus provides the bacterium with a defense mechanism against endogenous cyanide toxicity. Is the main cytoplasmic rhodanese in P.aeruginosa, accounting for 90% of total rhodanese activity. The polypeptide is Thiosulfate sulfurtransferase (Pseudomonas aeruginosa (strain ATCC 15692 / DSM 22644 / CIP 104116 / JCM 14847 / LMG 12228 / 1C / PRS 101 / PAO1)).